The sequence spans 132 residues: MAKEYSRTQRIGDQMQRELAELIRREVKDPRVGLVTITAVDVSRDLGHAKVFITVMGEETPDAVQQSLKALNSAASFLRLHLGRSMQLRSVPQLHFHFDESVSRGVHLSALIERAVAEDRLHKDADESDTKE.

It belongs to the RbfA family. As to quaternary structure, monomer. Binds 30S ribosomal subunits, but not 50S ribosomal subunits or 70S ribosomes.

It is found in the cytoplasm. Its function is as follows. One of several proteins that assist in the late maturation steps of the functional core of the 30S ribosomal subunit. Associates with free 30S ribosomal subunits (but not with 30S subunits that are part of 70S ribosomes or polysomes). Required for efficient processing of 16S rRNA. May interact with the 5'-terminal helix region of 16S rRNA. The chain is Ribosome-binding factor A from Pseudomonas putida (strain ATCC 700007 / DSM 6899 / JCM 31910 / BCRC 17059 / LMG 24140 / F1).